Consider the following 116-residue polypeptide: Protein alpha-2 (116 aa).

This chain is Protein alpha-2 (alpha), found in Bos taurus (Bovine).